Consider the following 217-residue polypeptide: Large ribosomal subunit protein uL3 (217 aa).

This sequence belongs to the universal ribosomal protein uL3 family. Part of the 50S ribosomal subunit. Forms a cluster with proteins L14 and L19.

Functionally, one of the primary rRNA binding proteins, it binds directly near the 3'-end of the 23S rRNA, where it nucleates assembly of the 50S subunit. The sequence is that of Large ribosomal subunit protein uL3 from Mycobacterium sp. (strain KMS).